A 366-amino-acid polypeptide reads, in one-letter code: Mitogen-activated protein kinase p38a (366 aa).

Residues 25 to 312 (YQDLQPVGSG…AEEALSHPYL (288 aa)) enclose the Protein kinase domain. ATP-binding positions include 31 to 39 (VGSGAYGQV) and K54. D154 (proton acceptor) is an active-site residue. Phosphothreonine is present on T184. The TXY signature appears at 184-186 (TGY). Y186 is subject to Phosphotyrosine.

The protein belongs to the protein kinase superfamily. CMGC Ser/Thr protein kinase family. MAP kinase subfamily. Mg(2+) is required as a cofactor. In terms of processing, dually phosphorylated on Thr-184 and Tyr-186, which activates the enzyme.

The protein localises to the nucleus. It carries out the reaction L-seryl-[protein] + ATP = O-phospho-L-seryl-[protein] + ADP + H(+). The enzyme catalyses L-threonyl-[protein] + ATP = O-phospho-L-threonyl-[protein] + ADP + H(+). With respect to regulation, activated by threonine and tyrosine phosphorylation by Mkk3 in response to environmental stress. Functionally, kinase involved in a signal transduction pathway. May down-regulate insect immunity gene expression after prolonged infection. This is Mitogen-activated protein kinase p38a from Drosophila melanogaster (Fruit fly).